The following is a 509-amino-acid chain: Ribonuclease Y (509 aa).

Residues 5–25 (IAGVSGIAGAAVGAGACYLWL) form a helical membrane-spanning segment. The KH domain maps to 199-265 (LINLVNLPSD…TRVIEILIED (67 aa)). Residues 325–418 (ALAHTLEVAK…VCAADTLSAA (94 aa)) enclose the HD domain.

Belongs to the RNase Y family.

The protein resides in the cell membrane. Its function is as follows. Endoribonuclease that initiates mRNA decay. The polypeptide is Ribonuclease Y (Sulfurovum sp. (strain NBC37-1)).